Consider the following 469-residue polypeptide: Dynein axonemal assembly factor 11 (469 aa).

4 LRR repeats span residues 20–43, 44–65, 66–89, and 90–110; these read IFSL…DKWC, RELK…VSKL, KKLE…GCES, and LQKL…NSLQ. The LRRCT domain occupies 114-135; the sequence is HLRELYLVGNPCAEYEGYRQYV. Composition is skewed to basic and acidic residues over residues 179-213 and 261-286; these read KRAA…RRWY and SRLE…ELKK. 2 disordered regions span residues 179–290 and 436–469; these read KRAA…KPPR and KTQA…PPLM.

Belongs to the tilB family.

Its subcellular location is the cytoplasm. It localises to the cell projection. The protein localises to the cilium. It is found in the dynein axonemal particle. The protein resides in the flagellum. Its function is as follows. Involved in dynein arm assembly, is important for expression and transporting outer dynein arm (ODA) proteins from the cytoplasm to the cilia. The polypeptide is Dynein axonemal assembly factor 11 (dnaaf11) (Xenopus laevis (African clawed frog)).